We begin with the raw amino-acid sequence, 192 residues long: Cytidylate kinase (192 aa).

G7–T15 contributes to the ATP binding site.

The protein belongs to the cytidylate kinase family. Type 2 subfamily.

It localises to the cytoplasm. The enzyme catalyses CMP + ATP = CDP + ADP. It carries out the reaction dCMP + ATP = dCDP + ADP. The chain is Cytidylate kinase from Haloquadratum walsbyi (strain DSM 16790 / HBSQ001).